The primary structure comprises 108 residues: RGENVRPTVSIYCPSLEQRNSGSASTVCLVDKFYPGGAQVTWKGDNKVISSGVDTSDKIKDKDNTYSMSSTLTMSSEEFKYSTMTCEVTHPTLTPALAKSFQTSECTF.

Residues 7–102 enclose the Ig-like domain; the sequence is PTVSIYCPSL…LTPALAKSFQ (96 aa). 2 cysteine pairs are disulfide-bonded: Cys13–Cys106 and Cys28–Cys86.

The sequence is that of Ig light chain C region from Aquarana catesbeiana (American bullfrog).